The chain runs to 2059 residues: DNA polymerase theta (2059 aa).

Residues 25 to 45 are disordered; sequence DKENAQPGNGNIQVQSAGNEV. Over residues 30–45 the composition is skewed to polar residues; that stretch reads QPGNGNIQVQSAGNEV. Positions 243 to 416 constitute a Helicase ATP-binding domain; sequence PRLLFEHCNL…WLDAELYITN (174 aa). Position 256 to 263 (256 to 263) interacts with ATP; that stretch reads APTSAGKT. The DEAH box signature appears at 357–360; the sequence is DEVH. The Helicase C-terminal domain maps to 464 to 666; it reads CIETLLEGCS…HLKRALLEVI (203 aa). Disordered stretches follow at residues 1052 to 1073, 1168 to 1190, 1204 to 1274, and 1330 to 1372; these read PPVKRKLSIEENGTANSQKNPR, PQLANEEKPSTSQSARRKLVNEG, QRTQ…SRKV, and PHAS…GVSS. Over residues 1062–1071 the composition is skewed to polar residues; it reads ENGTANSQKN. Residues 1213 to 1274 show a composition bias toward polar residues; that stretch reads KDQPIQASRS…NANRTASRKV (62 aa). Positions 1355 to 1365 are enriched in basic and acidic residues; sequence REIEIDLESKN.

The protein belongs to the DNA polymerase type-A family. Mg(2+) is required as a cofactor. Post-translationally, in adult males, cleaved to produce a 100 kDa form. As to expression, expressed in ovaries (at protein level).

The protein localises to the nucleus. It carries out the reaction DNA(n) + a 2'-deoxyribonucleoside 5'-triphosphate = DNA(n+1) + diphosphate. Resistant to aphidicolin, but sensitive to dideoxythymindine triphosphate (ddTTP) and N-ethyl malemide (NEM). Multifunctional protein with both DNA polymerase and ATPase activities. Might have 3' to 5' exonuclease activity. Plays a role in different DNA repair pathways such as DNA strand cross-link repair and microhomology-mediated end-joining (MMEJ), an alternative non-homologous end-joining (NHEJ) machinery triggered in response to double-strand breaks. MMEJ is an error-prone repair pathway that produces deletions of sequences from the strand being repaired and promotes genomic rearrangements, such as telomere fusions. Utilizes short microhomologies present in partially and fully single-stranded DNA (ssDNA) as primers for DNA synthesis. Prefers poly(dA)/oligo(dT) as a template-primer. The ATPase activity is necessary during interstrand cross-link (ICL) repair and has a critical role in generating templated insertions during MMEJ. Necessary for processing DNA damage induced by oxygen and N-ethylation. In follicle cells, contributes to double-strand break repair at physiological rereplication forks necessary for survival of fertilized eggs. This chain is DNA polymerase theta, found in Drosophila melanogaster (Fruit fly).